A 500-amino-acid chain; its full sequence is L-aspartate semialdehyde sulfurtransferase (500 aa).

Cysteine 131 functions as the Cysteine persulfide intermediate in the catalytic mechanism. 2 CBS domains span residues 384 to 441 and 446 to 500; these read MADF…IFDS and MTKK…ARRY.

The protein belongs to the L-aspartate semialdehyde sulfurtransferase family. In terms of assembly, forms homodimers. May form a complex with MA_1822.

The enzyme catalyses L-aspartate 4-semialdehyde + reduced 2[4Fe-4S]-[ferredoxin] + hydrogen sulfide + 3 H(+) = oxidized 2[4Fe-4S]-[ferredoxin] + L-homocysteine + H2O. Its pathway is amino-acid biosynthesis. In terms of biological role, required for O-acetylhomoserine sulfhydrylase (OAHS)-independent homocysteine (Hcy) biosynthesis. Together with MA_1822, catalyzes the condensation of sulfide with aspartate semialdehyde to generate homocysteine. Likely functions through persulfide intermediate. The protein is L-aspartate semialdehyde sulfurtransferase of Methanosarcina acetivorans (strain ATCC 35395 / DSM 2834 / JCM 12185 / C2A).